A 206-amino-acid polypeptide reads, in one-letter code: Mediator of RNA polymerase II transcription subunit 19 (206 aa).

The disordered stretch occupies residues 171-206; the sequence is GTGTKTKKRKYKSNGSSMASPNTELQPDDMKRRRLE. The segment covering 183-195 has biased composition (polar residues); that stretch reads SNGSSMASPNTEL.

This sequence belongs to the Mediator complex subunit 19 family. Component of the Mediator complex.

The protein localises to the nucleus. Functionally, component of the Mediator complex, a coactivator involved in the regulated transcription of nearly all RNA polymerase II-dependent genes. Mediator functions as a bridge to convey information from gene-specific regulatory proteins to the basal RNA polymerase II transcription machinery. Mediator is recruited to promoters by direct interactions with regulatory proteins and serves as a scaffold for the assembly of a functional preinitiation complex with RNA polymerase II and the general transcription factors. The polypeptide is Mediator of RNA polymerase II transcription subunit 19 (ROX3) (Kluyveromyces lactis (strain ATCC 8585 / CBS 2359 / DSM 70799 / NBRC 1267 / NRRL Y-1140 / WM37) (Yeast)).